Reading from the N-terminus, the 438-residue chain is Enolase (438 aa).

Q174 lines the (2R)-2-phosphoglycerate pocket. E216 serves as the catalytic Proton donor. The Mg(2+) site is built by D253, E297, and D324. 4 residues coordinate (2R)-2-phosphoglycerate: K349, R378, S379, and K400. Residue K349 is the Proton acceptor of the active site.

Belongs to the enolase family. Component of the RNA degradosome, a multiprotein complex involved in RNA processing and mRNA degradation. It depends on Mg(2+) as a cofactor.

Its subcellular location is the cytoplasm. It localises to the secreted. The protein resides in the cell surface. It catalyses the reaction (2R)-2-phosphoglycerate = phosphoenolpyruvate + H2O. Its pathway is carbohydrate degradation; glycolysis; pyruvate from D-glyceraldehyde 3-phosphate: step 4/5. Its function is as follows. Catalyzes the reversible conversion of 2-phosphoglycerate (2-PG) into phosphoenolpyruvate (PEP). It is essential for the degradation of carbohydrates via glycolysis. This Psychrobacter cryohalolentis (strain ATCC BAA-1226 / DSM 17306 / VKM B-2378 / K5) protein is Enolase.